A 185-amino-acid chain; its full sequence is Potassium-transporting ATPase KdpC subunit 2 (185 aa).

Residues 8-28 form a helical membrane-spanning segment; sequence LGLVLIMFVLCGFIFPLTVTA.

It belongs to the KdpC family. As to quaternary structure, the system is composed of three essential subunits: KdpA, KdpB and KdpC.

Its subcellular location is the cell membrane. It localises to the membrane raft. Its function is as follows. Part of the high-affinity ATP-driven potassium transport (or Kdp) system, which catalyzes the hydrolysis of ATP coupled with the electrogenic transport of potassium into the cytoplasm. This subunit acts as a catalytic chaperone that increases the ATP-binding affinity of the ATP-hydrolyzing subunit KdpB by the formation of a transient KdpB/KdpC/ATP ternary complex. In Staphylococcus aureus (strain Mu50 / ATCC 700699), this protein is Potassium-transporting ATPase KdpC subunit 2.